We begin with the raw amino-acid sequence, 855 residues long: Suppressor of tumorigenicity 14 protein (855 aa).

Residues 1–20 (MGSDRARKGGGGPKDFGAGL) are disordered. Over 1–55 (MGSDRARKGGGGPKDFGAGLKYNSRHEKVNGLEEGVEFLPVNNVKKVEKHGPGRW) the chain is Cytoplasmic. A helical; Signal-anchor for type II membrane protein membrane pass occupies residues 56–76 (VVLAAVLIGLLLVLLGIGFLV). At 77–855 (WHLQYRDVRV…RDWIKENTGV (779 aa)) the chain is on the extracellular side. One can recognise an SEA domain in the interval 86 to 203 (VQKVFNGYMR…TSVVAFPTDS (118 aa)). N-linked (GlcNAc...) asparagine glycosylation occurs at N109. A disulfide bridge links C214 with C244. 2 consecutive CUB domains span residues 214–334 (CSFG…FFQL) and 340–447 (CGGR…YLSY). N-linked (GlcNAc...) asparagine glycosylation is present at N302. Cystine bridges form between C340–C366, C397–C410, C453–C464, C459–C477, C471–C486, C488–C501, C496–C514, C508–C523, C525–C537, C532–C550, C544–C559, C567–C579, C574–C593, C587–C602, and C641–C657. LDL-receptor class A domains follow at residues 452-487 (PCPG…LNCS), 487-524 (SCDA…QGCS), 524-560 (SCPA…ASCP), and 566-603 (TCTK…KDCD). N-linked (GlcNAc...) asparagine glycosylation occurs at N485. The Peptidase S1 domain maps to 615-854 (VVGGTDADEG…FRDWIKENTG (240 aa)). Active-site charge relay system residues include H656 and D711. N772 carries N-linked (GlcNAc...) asparagine glycosylation. Cystine bridges form between C776/C790 and C801/C830. S805 acts as the Charge relay system in catalysis.

It belongs to the peptidase S1 family. As to quaternary structure, interacts with CDCP1. May interact with TMEFF1. Interacts with iripin-3, a serine protease inhibitor from Ixodes ricinus saliva. Interacts with iripin-1, a serine protease inhibitor from Ixodes ricinus saliva.

The protein resides in the membrane. It catalyses the reaction Cleaves various synthetic substrates with Arg or Lys at the P1 position and prefers small side-chain amino acids, such as Ala and Gly, at the P2 position.. Functionally, exhibits trypsin-like activity as defined by cleavage of synthetic substrates with Arg or Lys as the P1 site. Involved in the terminal differentiation of keratinocytes through prostasin (PRSS8) activation and filaggrin (FLG) processing. Proteolytically cleaves and therefore activates TMPRSS13. The sequence is that of Suppressor of tumorigenicity 14 protein (ST14) from Homo sapiens (Human).